A 351-amino-acid chain; its full sequence is Glycerol-1-phosphate dehydrogenase [NAD(P)+] (351 aa).

NAD(+) contacts are provided by residues 97–101 and 119–122; these read GKVID and TSPS. Position 124 (Asp124) interacts with substrate. Ser128 provides a ligand contact to NAD(+). Asp171 serves as a coordination point for substrate. Asp171 and His251 together coordinate Zn(2+). Substrate is bound at residue His255. Zn(2+) is bound at residue His267.

It belongs to the glycerol-1-phosphate dehydrogenase family. As to quaternary structure, homodimer. Zn(2+) serves as cofactor.

The protein localises to the cytoplasm. It carries out the reaction sn-glycerol 1-phosphate + NAD(+) = dihydroxyacetone phosphate + NADH + H(+). It catalyses the reaction sn-glycerol 1-phosphate + NADP(+) = dihydroxyacetone phosphate + NADPH + H(+). Its pathway is membrane lipid metabolism; glycerophospholipid metabolism. In terms of biological role, catalyzes the NAD(P)H-dependent reduction of dihydroxyacetonephosphate (DHAP or glycerone phosphate) to glycerol 1-phosphate (G1P). The G1P thus generated is used as the glycerophosphate backbone of phospholipids in the cellular membranes of Archaea. This chain is Glycerol-1-phosphate dehydrogenase [NAD(P)+], found in Saccharolobus islandicus (strain L.S.2.15 / Lassen #1) (Sulfolobus islandicus).